The following is a 110-amino-acid chain: Large ribosomal subunit protein uL22 (110 aa).

A compositionally biased stretch (basic residues) spans 84-95 (ARGTASKIRKPT). Residues 84–110 (ARGTASKIRKPTSHVMVEVSKPEKKEA) form a disordered region.

Belongs to the universal ribosomal protein uL22 family. Part of the 50S ribosomal subunit.

Its function is as follows. This protein binds specifically to 23S rRNA; its binding is stimulated by other ribosomal proteins, e.g. L4, L17, and L20. It is important during the early stages of 50S assembly. It makes multiple contacts with different domains of the 23S rRNA in the assembled 50S subunit and ribosome. In terms of biological role, the globular domain of the protein is located near the polypeptide exit tunnel on the outside of the subunit, while an extended beta-hairpin is found that lines the wall of the exit tunnel in the center of the 70S ribosome. This chain is Large ribosomal subunit protein uL22, found in Campylobacter concisus (strain 13826).